The chain runs to 163 residues: SsrA-binding protein (163 aa).

Belongs to the SmpB family.

The protein localises to the cytoplasm. Required for rescue of stalled ribosomes mediated by trans-translation. Binds to transfer-messenger RNA (tmRNA), required for stable association of tmRNA with ribosomes. tmRNA and SmpB together mimic tRNA shape, replacing the anticodon stem-loop with SmpB. tmRNA is encoded by the ssrA gene; the 2 termini fold to resemble tRNA(Ala) and it encodes a 'tag peptide', a short internal open reading frame. During trans-translation Ala-aminoacylated tmRNA acts like a tRNA, entering the A-site of stalled ribosomes, displacing the stalled mRNA. The ribosome then switches to translate the ORF on the tmRNA; the nascent peptide is terminated with the 'tag peptide' encoded by the tmRNA and targeted for degradation. The ribosome is freed to recommence translation, which seems to be the essential function of trans-translation. This is SsrA-binding protein from Shewanella baltica (strain OS223).